Reading from the N-terminus, the 183-residue chain is Streptavidin (183 aa).

The N-terminal stretch at 1–24 is a signal peptide; sequence MRKIVVAAIAVSLTTVSITASASA. One can recognise an Avidin-like domain in the interval 37-159; the sequence is AEAGITGTWY…GHDTFTKVKP (123 aa). Positions 67 and 78 each coordinate biotin. The Cell attachment site; atypical signature appears at 83–85; sequence RYD. Residues Trp-116, Trp-132, and Trp-144 each coordinate biotin.

It belongs to the avidin/streptavidin family. As to quaternary structure, homotetramer.

Its subcellular location is the secreted. Its function is as follows. The biological function of streptavidin is not known. Forms a strong non-covalent specific complex with biotin (one molecule of biotin per subunit of streptavidin). This Streptomyces avidinii protein is Streptavidin.